The primary structure comprises 287 residues: Glucose uptake protein GlcU (287 aa).

The next 8 membrane-spanning stretches (helical) occupy residues 4–26 (LLAL…LGGG), 38–60 (ALIV…IFIV), 110–132 (WSTP…GIIL), 153–175 (ILIL…LFNV), 180–197 (ALLP…VLTY), 210–227 (ILPG…FISQ), 232–254 (VATS…IFIL), and 261–283 (RQLI…LGIA).

The protein belongs to the GRP transporter (TC 2.A.7.5) family.

The protein localises to the cell membrane. Functionally, involved in the uptake of glucose. This Bacillus subtilis (strain 168) protein is Glucose uptake protein GlcU (glcU).